The sequence spans 123 residues: Ribonuclease P protein component (123 aa).

Belongs to the RnpA family. Consists of a catalytic RNA component (M1 or rnpB) and a protein subunit.

The catalysed reaction is Endonucleolytic cleavage of RNA, removing 5'-extranucleotides from tRNA precursor.. Its function is as follows. RNaseP catalyzes the removal of the 5'-leader sequence from pre-tRNA to produce the mature 5'-terminus. It can also cleave other RNA substrates such as 4.5S RNA. The protein component plays an auxiliary but essential role in vivo by binding to the 5'-leader sequence and broadening the substrate specificity of the ribozyme. The chain is Ribonuclease P protein component from Streptococcus pneumoniae (strain JJA).